Here is a 425-residue protein sequence, read N- to C-terminus: Trigger factor (425 aa).

The PPIase FKBP-type domain maps to 163–248 (GDTAVIDFEG…IHEIKTKELP (86 aa)).

Belongs to the FKBP-type PPIase family. Tig subfamily.

Its subcellular location is the cytoplasm. The enzyme catalyses [protein]-peptidylproline (omega=180) = [protein]-peptidylproline (omega=0). Its function is as follows. Involved in protein export. Acts as a chaperone by maintaining the newly synthesized protein in an open conformation. Functions as a peptidyl-prolyl cis-trans isomerase. The sequence is that of Trigger factor from Bacillus cereus (strain G9842).